The sequence spans 85 residues: Large ribosomal subunit protein bL27 (85 aa).

A disordered region spans residues 1–20 (MAHKKAGGSTRNGRDSEAKR).

Belongs to the bacterial ribosomal protein bL27 family.

This is Large ribosomal subunit protein bL27 from Citrobacter koseri (strain ATCC BAA-895 / CDC 4225-83 / SGSC4696).